The sequence spans 398 residues: tRNA pseudouridine synthase D (398 aa).

Asp-76 serves as the catalytic Nucleophile. The TRUD domain occupies 151–361 (GVPNRFGVQR…MEGERRPLRV (211 aa)).

The protein belongs to the pseudouridine synthase TruD family.

It carries out the reaction uridine(13) in tRNA = pseudouridine(13) in tRNA. Its function is as follows. Responsible for synthesis of pseudouridine from uracil-13 in transfer RNAs. The sequence is that of tRNA pseudouridine synthase D from Geobacter sp. (strain M21).